We begin with the raw amino-acid sequence, 327 residues long: Probable cell division protein WhiA (327 aa).

The segment at residues 277 to 310 is a DNA-binding region (H-T-H motif); sequence EELGRLADPPMTKDAVAGRIRRLLSMADRKAKQD. The disordered stretch occupies residues 304–327; that stretch reads DRKAKQDGIPDTESAVTPDLLEDA.

The protein belongs to the WhiA family.

Its function is as follows. Involved in cell division and chromosome segregation. This Mycolicibacterium vanbaalenii (strain DSM 7251 / JCM 13017 / BCRC 16820 / KCTC 9966 / NRRL B-24157 / PYR-1) (Mycobacterium vanbaalenii) protein is Probable cell division protein WhiA.